Here is a 482-residue protein sequence, read N- to C-terminus: ATP synthase subunit beta (482 aa).

162–169 (GGAGVGKT) serves as a coordination point for ATP.

This sequence belongs to the ATPase alpha/beta chains family. F-type ATPases have 2 components, CF(1) - the catalytic core - and CF(0) - the membrane proton channel. CF(1) has five subunits: alpha(3), beta(3), gamma(1), delta(1), epsilon(1). CF(0) has four main subunits: a(1), b(1), b'(1) and c(9-12).

The protein localises to the cellular thylakoid membrane. The enzyme catalyses ATP + H2O + 4 H(+)(in) = ADP + phosphate + 5 H(+)(out). Functionally, produces ATP from ADP in the presence of a proton gradient across the membrane. The catalytic sites are hosted primarily by the beta subunits. This chain is ATP synthase subunit beta, found in Nostoc punctiforme (strain ATCC 29133 / PCC 73102).